The sequence spans 358 residues: Cyclin-dependent kinase 11 (358 aa).

One can recognise a Protein kinase domain in the interval 52–336 (FKKLYTINEG…ASDALKHPYF (285 aa)). ATP is bound by residues 58 to 66 (INEGAFGVV) and K81. Catalysis depends on D176, which acts as the Proton acceptor.

This sequence belongs to the protein kinase superfamily. CMGC Ser/Thr protein kinase family. CDC2/CDKX subfamily.

The catalysed reaction is L-seryl-[protein] + ATP = O-phospho-L-seryl-[protein] + ADP + H(+). The enzyme catalyses L-threonyl-[protein] + ATP = O-phospho-L-threonyl-[protein] + ADP + H(+). This is Cyclin-dependent kinase 11 (cdk11) from Dictyostelium discoideum (Social amoeba).